We begin with the raw amino-acid sequence, 205 residues long: Holliday junction branch migration complex subunit RuvA (205 aa).

The domain I stretch occupies residues Met1–His64. The tract at residues Glu65–Thr143 is domain II. A flexible linker region spans residues Leu144–Ser153. Positions Gly154 to Lys205 are domain III.

It belongs to the RuvA family. In terms of assembly, homotetramer. Forms an RuvA(8)-RuvB(12)-Holliday junction (HJ) complex. HJ DNA is sandwiched between 2 RuvA tetramers; dsDNA enters through RuvA and exits via RuvB. An RuvB hexamer assembles on each DNA strand where it exits the tetramer. Each RuvB hexamer is contacted by two RuvA subunits (via domain III) on 2 adjacent RuvB subunits; this complex drives branch migration. In the full resolvosome a probable DNA-RuvA(4)-RuvB(12)-RuvC(2) complex forms which resolves the HJ.

It localises to the cytoplasm. Its function is as follows. The RuvA-RuvB-RuvC complex processes Holliday junction (HJ) DNA during genetic recombination and DNA repair, while the RuvA-RuvB complex plays an important role in the rescue of blocked DNA replication forks via replication fork reversal (RFR). RuvA specifically binds to HJ cruciform DNA, conferring on it an open structure. The RuvB hexamer acts as an ATP-dependent pump, pulling dsDNA into and through the RuvAB complex. HJ branch migration allows RuvC to scan DNA until it finds its consensus sequence, where it cleaves and resolves the cruciform DNA. This Pseudomonas putida (strain W619) protein is Holliday junction branch migration complex subunit RuvA.